A 1025-amino-acid polypeptide reads, in one-letter code: Probable beta-galactosidase B (1025 aa).

Positions 1–21 are cleaved as a signal peptide; that stretch reads MATAFWLLLFLLGSLHVLTAA. An N-linked (GlcNAc...) asparagine glycan is attached at Asn-23. Tyr-90 is a binding site for substrate. Asn-100 is a glycosylation site (N-linked (GlcNAc...) asparagine). Residues Asn-135, Ala-136, Glu-137, and Asn-195 each coordinate substrate. Glu-196 serves as the catalytic Proton donor. Asn-211 carries N-linked (GlcNAc...) asparagine glycosylation. Tyr-265 serves as a coordination point for substrate. A disulfide bond links Cys-271 and Cys-324. Catalysis depends on Glu-308, which acts as the Nucleophile. Tyr-373 provides a ligand contact to substrate. N-linked (GlcNAc...) asparagine glycosylation is found at Asn-411, Asn-456, Asn-736, Asn-776, Asn-884, Asn-925, and Asn-926.

Belongs to the glycosyl hydrolase 35 family.

The protein localises to the secreted. The catalysed reaction is Hydrolysis of terminal non-reducing beta-D-galactose residues in beta-D-galactosides.. In terms of biological role, cleaves beta-linked terminal galactosyl residues from gangliosides, glycoproteins, and glycosaminoglycans. This chain is Probable beta-galactosidase B (lacB), found in Emericella nidulans (strain FGSC A4 / ATCC 38163 / CBS 112.46 / NRRL 194 / M139) (Aspergillus nidulans).